Here is a 446-residue protein sequence, read N- to C-terminus: Phosphoglucosamine mutase (446 aa).

Ser-102 serves as the catalytic Phosphoserine intermediate. The Mg(2+) site is built by Ser-102, Asp-241, Asp-243, and Asp-245. Position 102 is a phosphoserine (Ser-102).

The protein belongs to the phosphohexose mutase family. Mg(2+) serves as cofactor. In terms of processing, activated by phosphorylation.

It catalyses the reaction alpha-D-glucosamine 1-phosphate = D-glucosamine 6-phosphate. Its function is as follows. Catalyzes the conversion of glucosamine-6-phosphate to glucosamine-1-phosphate. The chain is Phosphoglucosamine mutase from Idiomarina loihiensis (strain ATCC BAA-735 / DSM 15497 / L2-TR).